The primary structure comprises 346 residues: Heat-inducible transcription repressor HrcA (346 aa).

It belongs to the HrcA family.

Its function is as follows. Negative regulator of class I heat shock genes (grpE-dnaK-dnaJ and groELS operons). Prevents heat-shock induction of these operons. This is Heat-inducible transcription repressor HrcA from Pediococcus pentosaceus (strain ATCC 25745 / CCUG 21536 / LMG 10740 / 183-1w).